A 308-amino-acid polypeptide reads, in one-letter code: Phenylcoumaran benzylic ether reductase TP7 (308 aa).

NADP(+) contacts are provided by residues 11–17 (GGTGYIG), Arg36, and Lys45. The Proton acceptor role is filled by Lys133. Arg137 is an NADP(+) binding site.

This sequence belongs to the NmrA-type oxidoreductase family. Isoflavone reductase subfamily. In terms of tissue distribution, expressed in flowers. Expressed at low levels in stems.

The enzyme catalyses (-)-dehydrodiconiferyl alcohol + NADPH + H(+) = (S)-isodihydrodehydrodiconiferyl alcohol + NADP(+). The catalysed reaction is (+)-dehydrodiconiferyl alcohol + NADPH + H(+) = (R)-isodihydrodehydrodiconiferyl alcohol + NADP(+). It carries out the reaction (2R,3S)-dihydrodehydrodiconiferyl alcohol + NADPH + H(+) = (S)-tetrahydrodehydrodiconiferyl alcohol + NADP(+). It catalyses the reaction (2S,3R)-dihydrodehydrodiconiferyl alcohol + NADPH + H(+) = (R)-tetrahydrodehydrodiconiferyl alcohol + NADP(+). Functionally, oxidoreductase involved in lignan biosynthesis. Catalyzes the NADPH-dependent reduction of phenylcoumaran benzylic ethers. Converts dehydrodiconiferyl alcohol (DDC) to isodihydrodehydrodiconiferyl alcohol (IDDDC), and dihydrodehydrodiconiferyl alcohol (DDDC) to tetrahydrodehydrodiconiferyl alcohol (TDDC). In Nicotiana tabacum (Common tobacco), this protein is Phenylcoumaran benzylic ether reductase TP7.